The sequence spans 186 residues: UPF0301 protein Swit_2673 (186 aa).

It belongs to the UPF0301 (AlgH) family.

This chain is UPF0301 protein Swit_2673, found in Rhizorhabdus wittichii (strain DSM 6014 / CCUG 31198 / JCM 15750 / NBRC 105917 / EY 4224 / RW1) (Sphingomonas wittichii).